We begin with the raw amino-acid sequence, 601 residues long: MKMNRIWLLLLTFSSAIHSPVQGESLVCKNALQDLSFLEHLLQVKYAPKTWKEQYLGWDLVQSSVSAQQKLRTQENPSTSFCQQVLADFIGGLNDFHAGVTFFAIESAYLPYTVQKSSDGRFYFVDIMTFSSEIRVGDELLEVDGAPVQDVLATLYGSNHKGTAAEESAALRTLFSRMASLGHKVPSGRTTLKIRRPFGTTREVRVKWRYVPEGVGDLATIAPSIRAPQLQKSMRSFFPKKDDAFHRSSSLFYSPMVPHFWAELRNHYATSGLKSGYNIGSTDGFLPVIGPVIWESEGLFRAYISSVTDGDGKSHKVGFLRIPTYSWQDMEDFDPSGPPPWEEFAKIIQVFSSNTEALIIDQTNNPGGSVLYLYALLSMLTDRPLELPKHRMILTQDEVVDALDWLTLLENVDTNVESRLALGDNMEGYTVDLQVAEYLKSFGRQVLNCWSKGDIELSTPIPLFGFEKIHPHPRVQYSKPICVLINEQDFSCADFFPVVLKDNDRALIVGTRTAGAGGFVFNVQFPNRTGIKTCSLTGSLAVREHGAFIENIGVEPHIDLPFTANDIRYKGYSEYLDKVKKLVCQLINNDGTIILAEDGSF.

It belongs to the chlamydial CPn_1016/CT_858/TC_0248 family.

The chain is Protein CT_858 from Chlamydia trachomatis serovar D (strain ATCC VR-885 / DSM 19411 / UW-3/Cx).